We begin with the raw amino-acid sequence, 1308 residues long: Misshapen-like kinase 1 (1308 aa).

Positions 25–289 (FELVEVVGNG…TEQLLKFPFI (265 aa)) constitute a Protein kinase domain. Residues 31–39 (VGNGTYGQV) and Lys54 contribute to the ATP site. The active-site Proton acceptor is the Asp153. 3 disordered regions span residues 299 to 347 (RIQL…NVPG), 363 to 383 (KSNS…QRDP), and 395 to 862 (QRRI…GGTM). Residues 317–333 (EETEYEYSGSEEEDDSH) are compositionally biased toward acidic residues. Ser324 and Ser326 each carry phosphoserine. Residues 371-380 (QQQQLQQQQQ) are compositionally biased toward low complexity. Basic and acidic residues predominate over residues 396 to 466 (RRIEEQKEER…EEQRQSERLQ (71 aa)). Positions 479 to 497 (LQQQQQQQQLQKQQQQQQQ) are enriched in low complexity. An omega-N-methylarginine mark is found at Arg503 and Arg511. Over residues 520–530 (AWAREVEERAR) the composition is skewed to basic and acidic residues. Positions 600 to 610 (RSQSLQDQPTR) are enriched in polar residues. Over residues 623–633 (PAAVPTPTATP) the composition is skewed to low complexity. The residue at position 644 (Ser644) is a Phosphoserine. Residues 673–685 (QRTSSIATALNTS) are compositionally biased toward polar residues. 6 positions are modified to phosphoserine: Asp702, Ser720, Ser729, Ser745, Ser746, and Ser750. Positions 702 to 714 (DLRRSDPGWERSD) are enriched in basic and acidic residues. The segment covering 773-797 (AIGEDFVLLKERTLDEAPKPPKKAM) has biased composition (basic and acidic residues). Residues 804 to 820 (EEVESSEEEEEEGDGEP) show a composition bias toward acidic residues. Positions 842 to 1308 (MVVHDVEEIS…TLNRNCIMNW (467 aa)) are mediates interaction with RAP2A. Thr867 is subject to Phosphothreonine. The segment at 881–918 (GYTNLPDVVQPSHSPTENSKGQSPPTKDGGSDYQSRGL) is disordered. Positions 891–905 (PSHSPTENSKGQSPP) are enriched in polar residues. Positions 995-1282 (NSEILCAALW…KFLCERNDKV (288 aa)) constitute a CNH domain.

The protein belongs to the protein kinase superfamily. STE Ser/Thr protein kinase family. STE20 subfamily. In terms of assembly, interacts with RAP2A and TANC1. Interacts with NCK1. It depends on Mg(2+) as a cofactor. Post-translationally, autophosphorylated. In terms of tissue distribution, appears to be ubiquitous, expressed in all tissue types examined. Highly expressed in the brain, moderately expressed in kidney and spleen, low levels present in heart and skeletal muscle. Isoform 2 is more abundant in the brain than isoform 1.

It localises to the cytoplasm. The protein localises to the postsynaptic density. Its subcellular location is the cell projection. The protein resides in the axon. It is found in the dendrite. The catalysed reaction is L-seryl-[protein] + ATP = O-phospho-L-seryl-[protein] + ADP + H(+). It catalyses the reaction L-threonyl-[protein] + ATP = O-phospho-L-threonyl-[protein] + ADP + H(+). Serine/threonine kinase which acts as a negative regulator of Ras-related Rap2-mediated signal transduction to control neuronal structure and AMPA receptor trafficking. Required for normal synaptic density, dendrite complexity, as well as surface AMPA receptor expression in hippocampal neurons. Can activate the JNK and MAPK14/p38 pathways and mediates stimulation of the stress-activated protein kinase MAPK14/p38 MAPK downstream of the Raf/ERK pathway. Phosphorylates TANC1 upon stimulation by RAP2A, MBP and SMAD1. Has an essential function in negative selection of thymocytes, perhaps by coupling NCK1 to activation of JNK1. Activator of the Hippo signaling pathway which plays a pivotal role in organ size control and tumor suppression by restricting proliferation and promoting apoptosis. MAP4Ks act in parallel to and are partially redundant with STK3/MST2 and STK4/MST2 in the phosphorylation and activation of LATS1/2, and establish MAP4Ks as components of the expanded Hippo pathway. The protein is Misshapen-like kinase 1 of Mus musculus (Mouse).